Consider the following 316-residue polypeptide: N-acetyl-gamma-glutamyl-phosphate reductase (316 aa).

The active site involves Cys-136.

Belongs to the NAGSA dehydrogenase family. Type 1 subfamily.

It is found in the cytoplasm. The enzyme catalyses N-acetyl-L-glutamate 5-semialdehyde + phosphate + NADP(+) = N-acetyl-L-glutamyl 5-phosphate + NADPH + H(+). It functions in the pathway amino-acid biosynthesis; L-arginine biosynthesis; N(2)-acetyl-L-ornithine from L-glutamate: step 3/4. Catalyzes the NADPH-dependent reduction of N-acetyl-5-glutamyl phosphate to yield N-acetyl-L-glutamate 5-semialdehyde. The protein is N-acetyl-gamma-glutamyl-phosphate reductase of Xanthomonas campestris pv. campestris (strain B100).